A 1479-amino-acid polypeptide reads, in one-letter code: ESX secretion system protein EccC (1479 aa).

Residues 1–235 are Cytoplasmic-facing; that stretch reads MSQLWVLYET…SQEGDGDPRG (235 aa). A helical transmembrane segment spans residues 236–256; sequence LWLMVLPPVMMLLVIGAVALI. The Extracellular segment spans residues 257-259; the sequence is QPR. The chain crosses the membrane as a helical span at residues 260 to 280; that stretch reads GVFIMISIAMFATTIVTSTAQ. The Cytoplasmic segment spans residues 281 to 1479; it reads YMREKKARQM…DQKIQIPKVE (1199 aa). A coiled-coil region spans residues 291-321; sequence RKEKRRRIYTNYLEQKREELQALSEKQRNVL. FtsK domains lie at 652–848 and 984–1168; these read NDVV…NDSK and QSDY…SEKF. Residue 672 to 679 coordinates ATP; sequence GTTGSGKS. Residue Glu-785 is part of the active site. Residues 1004–1009, Asn-1036, Asp-1105, Ile-1197, Asp-1206, 1287–1291, and Ile-1475 contribute to the ATP site; these read GYGKST and RKGKT. The FtsK 3 domain maps to 1267–1444; sequence VRPVAINMRT…ILVTKKSEQS (178 aa).

As to quaternary structure, whole protein oligomerizes in native gels. Part of the ESX / type VII secretion system (T7SS), which is composed of cytosolic and membrane components. The ESX membrane complex is composed of EccB, EccC and EccD.

The protein resides in the cell membrane. EsxB binding to the third FtsK domain causes multimerization; a subsequent unknown step relieves the allosteric inhibition of linker 2 on FtsK domain 1, activating the ATPase activity. Functionally, part of the ESX specialized secretion system, which exports proteins from the cell including EsxA (ESAT-6) and EsxB (CFP-10). Might be the translocase subunit. Probably only the first FtsK domain can hydrolyze ATP. The polypeptide is ESX secretion system protein EccC (Geobacillus thermodenitrificans (strain NG80-2)).